Here is a 222-residue protein sequence, read N- to C-terminus: Physcion biosynthesis cluster O-methyltransferase (222 aa).

Belongs to the methyltransferase superfamily.

It carries out the reaction emodin + S-adenosyl-L-methionine = physcion + S-adenosyl-L-homocysteine. The protein operates within secondary metabolite biosynthesis. Its function is as follows. O-methyltransferase; part of the gene cluster that mediates the biosynthesis of physcion, a natural anthraquinone fungicide that can prevent plant fungal infections. Within the pathway, the O-methyltransferase AcOMT catalyzes the last step by transferring a methyl group to C-6 hydroxyl of emodin to form physcion. AcOMT may also methylate the C-6 hydroxyl group of emodin anthrone to produce physcion-anthrone B. The pathway begins with the polyketide synthase AcPKS that condenses 8 malonyl-CoA units to synthesize atrochrysone thioester which is released from the synthase by the atrochrysone carboxyl ACP thioesterase AcTE that breaks the thioester bond and leads to free atrochrysone carboxylic acid. Spontaneous decarboxylation of atrochrysone carboxylic acid leads to the formation of atrochrysone. Then, atrochrysone undergoes spontaneous dehydration and oxidation, giving the products emodin anthrone and emodin. The O-methyltransferase AcOMT then methylates the C-6 hydroxyl of emodin to form physcion. This chain is Physcion biosynthesis cluster O-methyltransferase, found in Aspergillus chevalieri (Eurotium chevalieri).